Here is a 103-residue protein sequence, read N- to C-terminus: NADH-quinone oxidoreductase subunit K 1 (103 aa).

A run of 3 helical transmembrane segments spans residues 6–26 (LGHF…GIFL), 32–52 (IIIL…LVAF), and 67–87 (LVLT…VVFF).

The protein belongs to the complex I subunit 4L family. As to quaternary structure, NDH-1 is composed of 14 different subunits. Subunits NuoA, H, J, K, L, M, N constitute the membrane sector of the complex.

Its subcellular location is the cell inner membrane. It carries out the reaction a quinone + NADH + 5 H(+)(in) = a quinol + NAD(+) + 4 H(+)(out). Its function is as follows. NDH-1 shuttles electrons from NADH, via FMN and iron-sulfur (Fe-S) centers, to quinones in the respiratory chain. The immediate electron acceptor for the enzyme in this species is believed to be ubiquinone. Couples the redox reaction to proton translocation (for every two electrons transferred, four hydrogen ions are translocated across the cytoplasmic membrane), and thus conserves the redox energy in a proton gradient. This Rhodopseudomonas palustris (strain ATCC BAA-98 / CGA009) protein is NADH-quinone oxidoreductase subunit K 1.